A 297-amino-acid chain; its full sequence is GATA transcription factor 24 (297 aa).

The region spanning 73 to 108 (GIENGDQLTLSFQGQVYVFDRVSPEKVQAVLLLLGG) is the Tify domain. Residues 143–185 (RLASLLRFREKRKGRNFDKTIRYTVRKEVALRMQRKKGQFTSA) form the CCT domain. Positions 178–203 (KKGQFTSAKSSNDDSGSTGSDWGSNQ) are disordered. Residues 190-201 (DDSGSTGSDWGS) show a composition bias toward low complexity. The segment at 213–269 (QKPEVLCRHCGTSEKSTPMMRRGPDGPRTLCNACGLMWANKGTLRDLSKVPPPQTPQ) adopts a GATA-type zinc-finger fold.

This sequence belongs to the type IV zinc-finger family. Class C subfamily. Predominantly expressed in shoot apices, inflorescences and roots.

Its subcellular location is the nucleus. In terms of biological role, transcriptional activator that specifically binds 5'-GATA-3' or 5'-GAT-3' motifs within gene promoters. This chain is GATA transcription factor 24 (GATA24), found in Arabidopsis thaliana (Mouse-ear cress).